The following is a 245-amino-acid chain: Protein OXIDATIVE STRESS 3 LIKE 6 (245 aa).

Residues 46 to 90 form a disordered region; sequence QIGIGLRMSNNNNKSPEESSDSSSSIGESSENEEEEEEDDAVSCQ. The segment covering 75-86 has biased composition (acidic residues); it reads SENEEEEEEDDA. The Nuclear localization signal motif lies at 143–151; it reads NKRRRLVIA. Residues 203–230 are kinase-inducible domain (KID); it reads DDHRKIMMMMKNKKELMAQTRSCFCLSS.

It is found in the nucleus. Its function is as follows. Probable transcription factor. Promotes slightly the tolerance to cadmium (Cd) and to oxidizing chemicals (e.g. diamide). The polypeptide is Protein OXIDATIVE STRESS 3 LIKE 6 (Arabidopsis thaliana (Mouse-ear cress)).